An 875-amino-acid chain; its full sequence is Leucine--tRNA ligase (875 aa).

Residues 57–67 carry the 'HIGH' region motif; that stretch reads PYPSGQIHMGH. A 'KMSKS' region motif is present at residues 631-635; the sequence is KMSKS. Lys-634 lines the ATP pocket.

Belongs to the class-I aminoacyl-tRNA synthetase family.

It is found in the cytoplasm. It carries out the reaction tRNA(Leu) + L-leucine + ATP = L-leucyl-tRNA(Leu) + AMP + diphosphate. The protein is Leucine--tRNA ligase of Granulibacter bethesdensis (strain ATCC BAA-1260 / CGDNIH1).